The following is an 822-amino-acid chain: Penicillin-binding protein 1A (822 aa).

The Cytoplasmic portion of the chain corresponds to 1 to 5 (MRLLK). Residues 6-26 (FLWWTCVTLICGVLLSFSGAY) traverse the membrane as a helical; Signal-anchor for type II membrane protein segment. The Periplasmic segment spans residues 27–822 (LYLSPSLPSV…DDEGAPIDLF (796 aa)). Residues 48-216 (LKVYSEDGKL…SRYNPLVNPT (169 aa)) are transglycosylase. Glu86 functions as the Proton donor; for transglycosylase activity in the catalytic mechanism. The tract at residues 403–744 (IRVQRQEDGT…GTVALPIWIR (342 aa)) is transpeptidase. The active-site Acyl-ester intermediate; for transpeptidase activity is Ser461. Disordered stretches follow at residues 614–654 (AADA…FEPT) and 790–822 (KNEDTPPSVNELPPGSFPGSPLPDDEGAPIDLF). Acidic residues predominate over residues 812–822 (PDDEGAPIDLF).

This sequence in the N-terminal section; belongs to the glycosyltransferase 51 family. The protein in the C-terminal section; belongs to the transpeptidase family.

It is found in the cell inner membrane. The catalysed reaction is [GlcNAc-(1-&gt;4)-Mur2Ac(oyl-L-Ala-gamma-D-Glu-L-Lys-D-Ala-D-Ala)](n)-di-trans,octa-cis-undecaprenyl diphosphate + beta-D-GlcNAc-(1-&gt;4)-Mur2Ac(oyl-L-Ala-gamma-D-Glu-L-Lys-D-Ala-D-Ala)-di-trans,octa-cis-undecaprenyl diphosphate = [GlcNAc-(1-&gt;4)-Mur2Ac(oyl-L-Ala-gamma-D-Glu-L-Lys-D-Ala-D-Ala)](n+1)-di-trans,octa-cis-undecaprenyl diphosphate + di-trans,octa-cis-undecaprenyl diphosphate + H(+). The enzyme catalyses Preferential cleavage: (Ac)2-L-Lys-D-Ala-|-D-Ala. Also transpeptidation of peptidyl-alanyl moieties that are N-acyl substituents of D-alanine.. It functions in the pathway cell wall biogenesis; peptidoglycan biosynthesis. Cell wall formation. Synthesis of cross-linked peptidoglycan from the lipid intermediates. The enzyme has a penicillin-insensitive transglycosylase N-terminal domain (formation of linear glycan strands) and a penicillin-sensitive transpeptidase C-terminal domain (cross-linking of the peptide subunits). This chain is Penicillin-binding protein 1A (mrcA), found in Pseudomonas aeruginosa (strain ATCC 15692 / DSM 22644 / CIP 104116 / JCM 14847 / LMG 12228 / 1C / PRS 101 / PAO1).